The chain runs to 283 residues: MFRDVLKTLPQYLIPKHGITALAGYFADVKNPRLKNFLIRNFIRKFDVDMSEALIEDPKSYDCFNDFFIRHLKPECRPLSQSDVICPVDGCISEIGKIERGQLLQAKGKYYSVQELLACDGQLAEQFVQGQFATLYLSPKDYHRVHMPIDAELVSMTYIPGALFSVQPATTRVVPKLFARNERLAIFFKTKIGPMVMVMVGATIVGAIGTSWHGDVKRSKKLERFDYSEQFSDKIISQGSEMGYFKLGSTVVLLFANGEKIQWDKELLAGSKIQLGKPMAIIT.

Residues Asp-89, His-146, and Ser-249 each act as charge relay system; for autoendoproteolytic cleavage activity in the active site. Ser-249 acts as the Schiff-base intermediate with substrate; via pyruvic acid; for decarboxylase activity in catalysis. Residue Ser-249 is modified to Pyruvic acid (Ser); by autocatalysis.

This sequence belongs to the phosphatidylserine decarboxylase family. PSD-B subfamily. Prokaryotic type I sub-subfamily. Heterodimer of a large membrane-associated beta subunit and a small pyruvoyl-containing alpha subunit. Pyruvate serves as cofactor. In terms of processing, is synthesized initially as an inactive proenzyme. Formation of the active enzyme involves a self-maturation process in which the active site pyruvoyl group is generated from an internal serine residue via an autocatalytic post-translational modification. Two non-identical subunits are generated from the proenzyme in this reaction, and the pyruvate is formed at the N-terminus of the alpha chain, which is derived from the carboxyl end of the proenzyme. The autoendoproteolytic cleavage occurs by a canonical serine protease mechanism, in which the side chain hydroxyl group of the serine supplies its oxygen atom to form the C-terminus of the beta chain, while the remainder of the serine residue undergoes an oxidative deamination to produce ammonia and the pyruvoyl prosthetic group on the alpha chain. During this reaction, the Ser that is part of the protease active site of the proenzyme becomes the pyruvoyl prosthetic group, which constitutes an essential element of the active site of the mature decarboxylase.

It is found in the cell membrane. The enzyme catalyses a 1,2-diacyl-sn-glycero-3-phospho-L-serine + H(+) = a 1,2-diacyl-sn-glycero-3-phosphoethanolamine + CO2. It functions in the pathway phospholipid metabolism; phosphatidylethanolamine biosynthesis; phosphatidylethanolamine from CDP-diacylglycerol: step 2/2. Its function is as follows. Catalyzes the formation of phosphatidylethanolamine (PtdEtn) from phosphatidylserine (PtdSer). In Legionella pneumophila (strain Lens), this protein is Phosphatidylserine decarboxylase proenzyme.